The primary structure comprises 189 residues: MVMLLLLLSALAGLFGAAEGQAFHLGKCPNPPVQENFDVNKYLGRWYEIEKIPTTFENGRCIQANYSLMENGKIKVLNQELRADGTVNQIEGEATPVNLTEPAKLEVKFSWFMPSAPYWILATDYENYALVYSCTCIIQLFHVDFAWILARNPNLPPETVDSLKNILTSNNIDVKKMTVTDQVNCPKLS.

Positions 1–20 are cleaved as a signal peptide; it reads MVMLLLLLSALAGLFGAAEG. Position 21 is a pyrrolidone carboxylic acid (Q21). Disulfide bonds link C28-C134 and C61-C185. N-linked (GlcNAc...) (complex) asparagine glycosylation is found at N65 and N98.

This sequence belongs to the calycin superfamily. Lipocalin family. As to quaternary structure, homodimer. In plasma, also exists as a disulfide-linked heterodimer with APOA2. N-glycosylated. N-glycan heterogeneity at Asn-65: Hex5HexNAc4 (major) and Hex6HexNAc5 (minor); at Asn-98: Hex5HexNAc4 (minor), dHex1Hex5HexNAc4 (major), dHex1Hex6HexNAc5 (minor) and dHex1Hex7HexNAc6 (minor). As to expression, expressed in liver, intestine, pancreas, kidney, placenta, adrenal, spleen, fetal brain tissue and tears.

The protein resides in the secreted. APOD occurs in the macromolecular complex with lecithin-cholesterol acyltransferase. It is probably involved in the transport and binding of bilin. Appears to be able to transport a variety of ligands in a number of different contexts. The chain is Apolipoprotein D (APOD) from Homo sapiens (Human).